A 98-amino-acid chain; its full sequence is MTTVGVSLFRRSPEKITMKIATFLGLSFLLIASYVLICEAQHPGFQELLILEENMRDPENSKERSCAKPRENCNRMNILCCRGECVCPTFGDCFCYGD.

The N-terminal stretch at 1-40 is a signal peptide; that stretch reads MTTVGVSLFRRSPEKITMKIATFLGLSFLLIASYVLICEA. A propeptide spanning residues 41 to 64 is cleaved from the precursor; that stretch reads QHPGFQELLILEENMRDPENSKER. Intrachain disulfides connect cysteine 66/cysteine 81, cysteine 73/cysteine 85, and cysteine 80/cysteine 95.

This sequence belongs to the hainantoxin family. 17 subfamily. As to expression, expressed by the venom gland.

Its subcellular location is the secreted. In terms of biological role, putative ion channel inhibitor. This Cyriopagopus hainanus (Chinese bird spider) protein is Hainantoxin-XVII.